The chain runs to 513 residues: ATP synthase subunit alpha (513 aa).

Gly169–Ser176 serves as a coordination point for ATP.

The protein belongs to the ATPase alpha/beta chains family. As to quaternary structure, F-type ATPases have 2 components, CF(1) - the catalytic core - and CF(0) - the membrane proton channel. CF(1) has five subunits: alpha(3), beta(3), gamma(1), delta(1), epsilon(1). CF(0) has three main subunits: a(1), b(2) and c(9-12). The alpha and beta chains form an alternating ring which encloses part of the gamma chain. CF(1) is attached to CF(0) by a central stalk formed by the gamma and epsilon chains, while a peripheral stalk is formed by the delta and b chains.

It localises to the cell inner membrane. It catalyses the reaction ATP + H2O + 4 H(+)(in) = ADP + phosphate + 5 H(+)(out). In terms of biological role, produces ATP from ADP in the presence of a proton gradient across the membrane. The alpha chain is a regulatory subunit. In Colwellia psychrerythraea (strain 34H / ATCC BAA-681) (Vibrio psychroerythus), this protein is ATP synthase subunit alpha.